Reading from the N-terminus, the 184-residue chain is UPF0316 protein BLi00691/BL01474 (184 aa).

A run of 3 helical transmembrane segments spans residues 9–29 (GVIM…FLTL), 41–61 (LAAF…GLVL), and 67–87 (IQNV…GTKI).

The protein belongs to the UPF0316 family.

It is found in the cell membrane. This Bacillus licheniformis (strain ATCC 14580 / DSM 13 / JCM 2505 / CCUG 7422 / NBRC 12200 / NCIMB 9375 / NCTC 10341 / NRRL NRS-1264 / Gibson 46) protein is UPF0316 protein BLi00691/BL01474.